Reading from the N-terminus, the 691-residue chain is Protein vreteno (691 aa).

The tract at residues Q128–E155 is disordered. 2 Tudor domains span residues K366–L427 and A573–P630.

Interacts with aub and piwi. Gonad-specific.

Its subcellular location is the cytoplasm. The protein localises to the cytoplasmic ribonucleoprotein granule. Its function is as follows. Gonad-specific protein essential for germline development to repress transposable elements and preventing their mobilization, which is essential for the germline integrity. Acts via the piRNA metabolic process in both germline and somatic gonadal tissues by mediating the repression of transposable elements during meiosis. Required for primary piRNA biogenesis in both germline and somatic gonadal tissues. This Drosophila melanogaster (Fruit fly) protein is Protein vreteno (vret).